A 246-amino-acid chain; its full sequence is Probable S-methyl-5'-thioinosine phosphorylase (246 aa).

Phosphate is bound by residues Thr10 and 52-53 (RH). Met185 is a binding site for substrate. A phosphate-binding site is contributed by Thr186. Residue 209–211 (NPA) participates in substrate binding.

Belongs to the PNP/MTAP phosphorylase family. MTAP subfamily. As to quaternary structure, homotrimer.

It catalyses the reaction S-methyl-5'-thioinosine + phosphate = 5-(methylsulfanyl)-alpha-D-ribose 1-phosphate + hypoxanthine. The protein operates within purine metabolism; purine nucleoside salvage. Functionally, catalyzes the reversible phosphorylation of S-methyl-5'-thioinosine (MTI) to hypoxanthine and 5-methylthioribose-1-phosphate. Involved in the breakdown of S-methyl-5'-thioadenosine (MTA), a major by-product of polyamine biosynthesis. Catabolism of (MTA) occurs via deamination to MTI and phosphorolysis to hypoxanthine. This Pseudomonas syringae pv. tomato (strain ATCC BAA-871 / DC3000) protein is Probable S-methyl-5'-thioinosine phosphorylase.